Here is a 101-residue protein sequence, read N- to C-terminus: MAGQKIRIRLKAYDHEAIDASARKIVETVTRTGARVVGPVPLPTEKNVYAVIRSPHKYKDSREHFEMRTHKRLIDILDPTPKTVDALMRIDLPASVDVNIQ.

This sequence belongs to the universal ribosomal protein uS10 family. Part of the 30S ribosomal subunit.

Involved in the binding of tRNA to the ribosomes. The polypeptide is Small ribosomal subunit protein uS10 (Corynebacterium efficiens (strain DSM 44549 / YS-314 / AJ 12310 / JCM 11189 / NBRC 100395)).